The chain runs to 124 residues: MPAPAATYERVVYKNPSEYHYMKVCLEFQDCGVGLNAAQFKQLLISAVKDLFGEVDAALPLDILTYEEKTLSAILRICSSGLVKLWSSLTLLGSYKGKKCAFRVIQVSPFLLALSGNSRELVLD.

Belongs to the eukaryotic/archaeal RNase P protein component 2 family. As to quaternary structure, RNase P consists of a catalytic RNA moiety and about 10 protein subunits; POP1, POP4, POP5, POP7, RPP14, RPP21, RPP25, RPP30, RPP38 and RPP40. Within the RNase P complex, POP1, POP7 and RPP25 form the 'finger' subcomplex, POP5, RPP14, RPP40 and homodimeric RPP30 form the 'palm' subcomplex, and RPP21, POP4 and RPP38 form the 'wrist' subcomplex. All subunits of the RNase P complex interact with the catalytic RNA.

It is found in the nucleus. The protein localises to the nucleolus. Functionally, component of ribonuclease P, a ribonucleoprotein complex that generates mature tRNA molecules by cleaving their 5'-ends. The chain is Ribonuclease P protein subunit p14 (RPP14) from Homo sapiens (Human).